The following is an 89-amino-acid chain: NAD(P)H-quinone oxidoreductase subunit L (89 aa).

2 helical membrane passes run 29–46 and 59–79; these read VLGGMYLFVVPLFLFYWM and LFIYGLVFLFFPGMVLFAPFL.

It belongs to the complex I NdhL subunit family. As to quaternary structure, NDH-1 can be composed of about 15 different subunits; different subcomplexes with different compositions have been identified which probably have different functions.

It localises to the cellular thylakoid membrane. The enzyme catalyses a plastoquinone + NADH + (n+1) H(+)(in) = a plastoquinol + NAD(+) + n H(+)(out). It carries out the reaction a plastoquinone + NADPH + (n+1) H(+)(in) = a plastoquinol + NADP(+) + n H(+)(out). In terms of biological role, NDH-1 shuttles electrons from an unknown electron donor, via FMN and iron-sulfur (Fe-S) centers, to quinones in the respiratory and/or the photosynthetic chain. The immediate electron acceptor for the enzyme in this species is believed to be plastoquinone. Couples the redox reaction to proton translocation, and thus conserves the redox energy in a proton gradient. Cyanobacterial NDH-1 also plays a role in inorganic carbon-concentration. The polypeptide is NAD(P)H-quinone oxidoreductase subunit L (Prochlorococcus marinus (strain NATL1A)).